We begin with the raw amino-acid sequence, 196 residues long: ATP-dependent Clp protease proteolytic subunit (196 aa).

S98 acts as the Nucleophile in catalysis. Residue H123 is part of the active site.

The protein belongs to the peptidase S14 family. As to quaternary structure, fourteen ClpP subunits assemble into 2 heptameric rings which stack back to back to give a disk-like structure with a central cavity, resembling the structure of eukaryotic proteasomes.

The protein resides in the cytoplasm. The enzyme catalyses Hydrolysis of proteins to small peptides in the presence of ATP and magnesium. alpha-casein is the usual test substrate. In the absence of ATP, only oligopeptides shorter than five residues are hydrolyzed (such as succinyl-Leu-Tyr-|-NHMec, and Leu-Tyr-Leu-|-Tyr-Trp, in which cleavage of the -Tyr-|-Leu- and -Tyr-|-Trp bonds also occurs).. Its function is as follows. Cleaves peptides in various proteins in a process that requires ATP hydrolysis. Has a chymotrypsin-like activity. Plays a major role in the degradation of misfolded proteins. The sequence is that of ATP-dependent Clp protease proteolytic subunit from Lactiplantibacillus plantarum (strain ATCC BAA-793 / NCIMB 8826 / WCFS1) (Lactobacillus plantarum).